A 232-amino-acid polypeptide reads, in one-letter code: UPF0758 protein Amet_2289 (232 aa).

The 123-residue stretch at 110–232 folds into the MPN domain; the sequence is RIKSPDDVSN…YYSLKEKSMM (123 aa). Histidine 181, histidine 183, and aspartate 194 together coordinate Zn(2+). A JAMM motif motif is present at residues 181 to 194; it reads HNHPSGDPSPSGED.

It belongs to the UPF0758 family.

This is UPF0758 protein Amet_2289 from Alkaliphilus metalliredigens (strain QYMF).